Reading from the N-terminus, the 269-residue chain is Regulatory protein RecX (269 aa).

This sequence belongs to the RecX family.

It is found in the cytoplasm. In terms of biological role, modulates RecA activity. The polypeptide is Regulatory protein RecX (Geobacillus kaustophilus (strain HTA426)).